The chain runs to 445 residues: Tubulin beta-4B chain (445 aa).

The short motif at 1-4 (MREI) is the MREI motif element. Residue glutamine 11 participates in GTP binding. The residue at position 55 (threonine 55) is a Phosphothreonine. An N6-acetyllysine modification is found at lysine 58. 5 residues coordinate GTP: glutamate 69, serine 138, glycine 142, threonine 143, and glycine 144. Residue glutamate 69 participates in Mg(2+) binding. The residue at position 172 (serine 172) is a Phosphoserine; by CDK1. GTP is bound by residues asparagine 204 and asparagine 226. The interval 426–445 (QDATAEEEGEFEEEAEEEVA) is disordered. Residues 429–445 (TAEEEGEFEEEAEEEVA) are compositionally biased toward acidic residues. Glutamate 438 carries the post-translational modification 5-glutamyl polyglutamate.

It belongs to the tubulin family. Dimer of alpha and beta chains. A typical microtubule is a hollow water-filled tube with an outer diameter of 25 nm and an inner diameter of 15 nM. Alpha-beta heterodimers associate head-to-tail to form protofilaments running lengthwise along the microtubule wall with the beta-tubulin subunit facing the microtubule plus end conferring a structural polarity. Microtubules usually have 13 protofilaments but different protofilament numbers can be found in some organisms and specialized cells. Component of sperm flagellar doublet microtubules. The cofactor is Mg(2+). Some glutamate residues at the C-terminus are polyglycylated, resulting in polyglycine chains on the gamma-carboxyl group. Glycylation is mainly limited to tubulin incorporated into axonemes (cilia and flagella) whereas glutamylation is prevalent in neuronal cells, centrioles, axonemes, and the mitotic spindle. Both modifications can coexist on the same protein on adjacent residues, and lowering polyglycylation levels increases polyglutamylation, and reciprocally. Cilia and flagella glycylation is required for their stability and maintenance. Flagella glycylation controls sperm motility. Post-translationally, some glutamate residues at the C-terminus are polyglutamylated, resulting in polyglutamate chains on the gamma-carboxyl group. Polyglutamylation plays a key role in microtubule severing by spastin (SPAST). SPAST preferentially recognizes and acts on microtubules decorated with short polyglutamate tails: severing activity by SPAST increases as the number of glutamates per tubulin rises from one to eight, but decreases beyond this glutamylation threshold. Glutamylation is also involved in cilia motility. In terms of processing, phosphorylated on Ser-172 by CDK1 during the cell cycle, from metaphase to telophase, but not in interphase. This phosphorylation inhibits tubulin incorporation into microtubules.

Its subcellular location is the cytoplasm. It is found in the cytoskeleton. The protein resides in the flagellum axoneme. Functionally, tubulin is the major constituent of microtubules, a cylinder consisting of laterally associated linear protofilaments composed of alpha- and beta-tubulin heterodimers. Microtubules grow by the addition of GTP-tubulin dimers to the microtubule end, where a stabilizing cap forms. Below the cap, tubulin dimers are in GDP-bound state, owing to GTPase activity of alpha-tubulin. The chain is Tubulin beta-4B chain (Tubb4b) from Rattus norvegicus (Rat).